Here is a 184-residue protein sequence, read N- to C-terminus: MPQSKSRKIAILGYRSVGKSSLTIQFVEGQFVDSYDPTIENTFTKLITVNGQEYHLQLVDTAGQDEYSIFPQTYSIDINGYILVYSVTSIKSFEVIKVIHGKLLDMVGKVQIPIMLVGNKKDLHMERVISYEEGKALAESWNAAFLESSAKENQTAVDVFKRIILEAEKIDGAASQGKSSCSVM.

Residue Lys-8 forms a Glycyl lysine isopeptide (Lys-Gly) (interchain with G-Cter in ubiquitin) linkage. Residues Ser-16, Val-17, Gly-18, Lys-19, Ser-20, Ser-21, Val-32, and Asp-33 each contribute to the GDP site. Residues Ser-16, Val-17, Gly-18, Lys-19, Ser-20, Ser-21, Val-32, Asp-33, Tyr-35, Pro-37, Thr-38, Gly-63, Asn-119, Lys-120, and Asp-122 each contribute to the GTP site. Ser-20 lines the Mg(2+) pocket. The short motif at 35–43 (YDPTIENTF) is the Effector region element. Thr-38 is a binding site for Mg(2+). Residue Asn-119 participates in GDP binding. Asp-122 is a binding site for GDP. Ser-130 carries the post-translational modification Phosphoserine; by MAPKAPK5. A GDP-binding site is contributed by Ala-150. Ala-150 contributes to the GTP binding site. Residue Cys-181 is modified to Cysteine methyl ester. A lipid anchor (S-farnesyl cysteine) is attached at Cys-181. Residues 182–184 (SVM) constitute a propeptide, removed in mature form.

This sequence belongs to the small GTPase superfamily. Rheb family. Associates with the mTORC1 complex (MTOR, MLST8 and RPTOR) in a guanyl nucleotide-independent manner. Interacts with TSC2. Interacts with MCRS1; the interaction maintains RHEB at the lysosome in its active GTP-bound form and prevents its interaction with the mTORC1 complex inhibitor TSC2, ensuring activation of the mTORC1 complex by RHEB. Interacts (when prenylated) with PDE6D; this promotes release from membranes. In terms of processing, farnesylation is important for efficiently activating mTORC1-mediated signaling. Post-translationally, polyubiquitinated in response to amino acid, promoting its interaction with MTOR and mTORC1 activation. Deubiquitination by ATXN3 promotes recruitment of the TSC-TBC complex and RHEB inactivation by TSC2. Monoubiquitinated at Lys-8 by RNF152, promoting its association with the TSC-TBC complex. Deubiquitinated at Lys-8 by USP4, promoting mTORC1 activation. Phosphorylation by MAPKAPK5 impairs GTP-binding and inactivation.

The protein resides in the endomembrane system. Its subcellular location is the lysosome membrane. It localises to the golgi apparatus membrane. The protein localises to the endoplasmic reticulum membrane. It is found in the cytoplasm. The protein resides in the cytosol. The enzyme catalyses GTP + H2O = GDP + phosphate + H(+). Alternates between an inactive form bound to GDP and an active form bound to GTP. Inactivated by the TSC-TBC complex via the GTPase activating protein (GAP) domain of TSC2. Autoinhibited by Tyr-35, which constrains the active site conformation, restricting the access of the catalytic Asp-65 to the nucleotide-binding pocket. In terms of biological role, small GTPase that acts as an allosteric activator of the canonical mTORC1 complex, an evolutionarily conserved central nutrient sensor that stimulates anabolic reactions and macromolecule biosynthesis to promote cellular biomass generation and growth. In response to nutrients, growth factors or amino acids, specifically activates the protein kinase activity of MTOR, the catalytic component of the mTORC1 complex: acts by causing a conformational change that allows the alignment of residues in the active site of MTOR, thereby enhancing the phosphorylation of ribosomal protein S6 kinase (RPS6KB1 and RPS6KB2) and EIF4EBP1 (4E-BP1). RHEB is also required for localization of the TSC-TBC complex to lysosomal membranes. In response to starvation, RHEB is inactivated by the TSC-TBC complex, preventing activation of mTORC1. Has low intrinsic GTPase activity. The polypeptide is GTP-binding protein Rheb (Mus musculus (Mouse)).